Here is a 149-residue protein sequence, read N- to C-terminus: Large ribosomal subunit protein bL9 (149 aa).

This sequence belongs to the bacterial ribosomal protein bL9 family.

Functionally, binds to the 23S rRNA. The chain is Large ribosomal subunit protein bL9 from Geobacillus thermodenitrificans (strain NG80-2).